The sequence spans 311 residues: 4-diphosphocytidyl-2-C-methyl-D-erythritol kinase (311 aa).

Lysine 16 is a catalytic residue. 100–110 (PIGAGLAGGSS) serves as a coordination point for ATP. Residue aspartate 142 is part of the active site.

Belongs to the GHMP kinase family. IspE subfamily.

It catalyses the reaction 4-CDP-2-C-methyl-D-erythritol + ATP = 4-CDP-2-C-methyl-D-erythritol 2-phosphate + ADP + H(+). It functions in the pathway isoprenoid biosynthesis; isopentenyl diphosphate biosynthesis via DXP pathway; isopentenyl diphosphate from 1-deoxy-D-xylulose 5-phosphate: step 3/6. Its function is as follows. Catalyzes the phosphorylation of the position 2 hydroxy group of 4-diphosphocytidyl-2C-methyl-D-erythritol. This Prochlorococcus marinus (strain AS9601) protein is 4-diphosphocytidyl-2-C-methyl-D-erythritol kinase.